The primary structure comprises 238 residues: Putative csd-like protein HI_1343 (238 aa).

K146 is subject to N6-(pyridoxal phosphate)lysine.

This sequence belongs to the class-V pyridoxal-phosphate-dependent aminotransferase family. Csd subfamily.

In Haemophilus influenzae (strain ATCC 51907 / DSM 11121 / KW20 / Rd), this protein is Putative csd-like protein HI_1343.